We begin with the raw amino-acid sequence, 385 residues long: O-phospho-L-seryl-tRNA:Cys-tRNA synthase (385 aa).

Pyridoxal 5'-phosphate-binding positions include 89-90 (AR), Asn-195, and 218-220 (SGH). N6-(pyridoxal phosphate)lysine is present on Lys-221.

Belongs to the SepCysS family. Homodimer. Interacts with SepRS. Pyridoxal 5'-phosphate is required as a cofactor.

It catalyses the reaction O-phospho-L-seryl-tRNA(Cys) + hydrogen sulfide + H(+) = L-cysteinyl-tRNA(Cys) + phosphate. Functionally, converts O-phospho-L-seryl-tRNA(Cys) (Sep-tRNA(Cys)) to L-cysteinyl-tRNA(Cys) (Cys-tRNA(Cys)). The polypeptide is O-phospho-L-seryl-tRNA:Cys-tRNA synthase (Methanococcus aeolicus (strain ATCC BAA-1280 / DSM 17508 / OCM 812 / Nankai-3)).